We begin with the raw amino-acid sequence, 2273 residues long: Acetyl-CoA carboxylase, mitochondrial (2273 aa).

The N-terminal 104 residues, 1–104 (KGKTITHGQS…RGNIHKHTRL (104 aa)), are a transit peptide targeting the mitochondrion. Residues 134–635 (VISKILIANN…STGWLDDLIL (502 aa)) form the Biotin carboxylation domain. Positions 292-484 (KTNFVSVPDD…LPATQLQIAM (193 aa)) constitute an ATP-grasp domain. 332-337 (GGGGKG) provides a ligand contact to ATP. Residue arginine 459 is part of the active site. The Biotinyl-binding domain occupies 763–837 (LEAELNPTQV…EAGDVIAKLT (75 aa)). Lysine 804 is subject to N6-biotinyllysine. Residues 1532–1867 (PYSVKDWLQP…KRDMSPPLLE (336 aa)) enclose the CoA carboxyltransferase N-terminal domain. A carboxyltransferase region spans residues 1532-2187 (PYSVKDWLQP…EGQVIKRLQK (656 aa)). Residues arginine 1776, lysine 2080, and arginine 2082 each coordinate CoA. One can recognise a CoA carboxyltransferase C-terminal domain in the interval 1871–2187 (RWDRDVDFKP…EGQVIKRLQK (317 aa)).

Biotin is required as a cofactor.

The protein resides in the mitochondrion. It catalyses the reaction hydrogencarbonate + acetyl-CoA + ATP = malonyl-CoA + ADP + phosphate + H(+). The enzyme catalyses N(6)-biotinyl-L-lysyl-[protein] + hydrogencarbonate + ATP = N(6)-carboxybiotinyl-L-lysyl-[protein] + ADP + phosphate + H(+). It functions in the pathway lipid metabolism; malonyl-CoA biosynthesis; malonyl-CoA from acetyl-CoA: step 1/1. Its function is as follows. Catalyzes the rate-limiting reaction in the mitochondrial fatty acid synthesis (FAS) type II pathway. Responsible for the production of the mitochondrial malonyl-CoA, used for the biosynthesis of the cofactor lipoic acid. This protein carries three functions: biotin carboxyl carrier protein, biotin carboxylase, and carboxyltransferase. The protein is Acetyl-CoA carboxylase, mitochondrial (HFA1) of Saccharomyces cerevisiae (strain YJM789) (Baker's yeast).